Reading from the N-terminus, the 454-residue chain is Mogroside I-E synthase (454 aa).

The active-site Proton acceptor is the His-18. His-18 is an an anthocyanidin binding site. Residue Asp-111 is the Charge relay of the active site. An anthocyanidin is bound at residue His-144. Cys-259 and Cys-331 form a disulfide bridge. Residues Ser-278, Cys-331, Gln-333, Trp-351, Asn-352, Ser-353, and Glu-356 each contribute to the UDP-alpha-D-glucose site. Ala-371 contributes to the an anthocyanidin binding site. Asp-372 and Gln-373 together coordinate UDP-alpha-D-glucose.

The protein belongs to the UDP-glycosyltransferase family. In terms of tissue distribution, highly expressed in young fruits 15 days after anthesis (15-DAA).

The enzyme catalyses mogrol + UDP-alpha-D-glucose = mogroside IE + UDP + H(+). It participates in secondary metabolite biosynthesis; terpenoid biosynthesis. Its activity is regulated as follows. Activity is increased by Mg(2+). Functionally, UDP-glycosyltransferase involved in the biosynthesis of cucurbitacin and mogroside tetracyclic triterpene natural products (e.g. siamenoside I and mogrosides IV, V and VI). Cucurbitacins have cytotoxic properties and exhibit deterrent taste as a defense barrier against herbivores. Mogrosides are nonsugar highly oxygenated compounds used as high-intensity zero-calorie sweeteners; they also possess pharmacological properties such as regulating immunity, lowering blood sugar and lipid levels, protecting the liver, and acting as antioxidants and antitumor agents. Catalyzes the transfer of a glucose moiety to the C-3 hydroxyl of mogrol to form mogroside I-E. Besides mogrol, UGT74AC1 also shows activity in vitro with quercetin and naringenin as substrate. The protein is Mogroside I-E synthase of Siraitia grosvenorii (Monk's fruit).